The chain runs to 281 residues: Bis(5'-nucleosyl)-tetraphosphatase, symmetrical (281 aa).

The protein belongs to the Ap4A hydrolase family.

The catalysed reaction is P(1),P(4)-bis(5'-adenosyl) tetraphosphate + H2O = 2 ADP + 2 H(+). Functionally, hydrolyzes diadenosine 5',5'''-P1,P4-tetraphosphate to yield ADP. The sequence is that of Bis(5'-nucleosyl)-tetraphosphatase, symmetrical from Acidovorax ebreus (strain TPSY) (Diaphorobacter sp. (strain TPSY)).